The following is a 219-amino-acid chain: Transcriptional regulatory protein QseB (219 aa).

One can recognise a Response regulatory domain in the interval 2 to 116 (RILLVEDDTL…EVAARLEALV (115 aa)). A 4-aspartylphosphate modification is found at D51. The segment at residues 124 to 218 (SSELRHGQVT…VHGIGYTLGD (95 aa)) is a DNA-binding region (ompR/PhoB-type).

Post-translationally, phosphorylated by QseC.

It localises to the cytoplasm. Functionally, member of a two-component regulatory system QseB/QseC. Activates the flagella regulon by activating transcription of flhDC. The chain is Transcriptional regulatory protein QseB (qseB) from Salmonella typhimurium (strain LT2 / SGSC1412 / ATCC 700720).